The primary structure comprises 258 residues: Thiamine thiazole synthase (258 aa).

NAD(+) contacts are provided by residues Ala-36, 55-56 (EK), Gly-63, Val-127, and 154-156 (HVD). 2 residues coordinate Fe cation: Asp-156 and His-171. Met-224 serves as a coordination point for NAD(+). Position 234 (Arg-234) interacts with glycine.

It belongs to the THI4 family. In terms of assembly, homooctamer; tetramer of dimers. It depends on Fe(2+) as a cofactor.

It catalyses the reaction hydrogen sulfide + glycine + NAD(+) = ADP-5-ethyl-4-methylthiazole-2-carboxylate + nicotinamide + 3 H2O + H(+). Its pathway is cofactor biosynthesis; thiamine diphosphate biosynthesis. Its function is as follows. Involved in the biosynthesis of the thiazole moiety of thiamine. Catalyzes the conversion of NAD and glycine to adenosine diphosphate 5-(2-hydroxyethyl)-4-methylthiazole-2-carboxylate (ADT), an adenylated thiazole intermediate, using free sulfide as a source of sulfur. In Methanococcoides burtonii (strain DSM 6242 / NBRC 107633 / OCM 468 / ACE-M), this protein is Thiamine thiazole synthase.